Reading from the N-terminus, the 315-residue chain is Probable serine acetyltransferase 4 (315 aa).

Positions 287–315 are disordered; sequence AKPIIGKKAAPQRRPEELPGVTMEQRWSD.

This sequence belongs to the transferase hexapeptide repeat family. Homomultimer.

It carries out the reaction L-serine + acetyl-CoA = O-acetyl-L-serine + CoA. It participates in amino-acid biosynthesis; L-cysteine biosynthesis; L-cysteine from L-serine: step 1/2. The polypeptide is Probable serine acetyltransferase 4 (SAT4) (Oryza sativa subsp. japonica (Rice)).